Consider the following 77-residue polypeptide: U8-lycotoxin-Ls1a (77 aa).

Residues 1–20 (MKLIIFTGLVLFAIVSLIEA) form the signal peptide. Residues 21–26 (QAENEK) constitute a propeptide that is removed on maturation.

Belongs to the neurotoxin 19 (CSTX) family. 08 (U8-Lctx) subfamily. Contains 4 disulfide bonds. As to expression, expressed by the venom gland.

It is found in the secreted. This Lycosa singoriensis (Wolf spider) protein is U8-lycotoxin-Ls1a.